The chain runs to 318 residues: DNA repair nuclease/redox regulator APEX1 (318 aa).

A disordered region spans residues 1 to 59; sequence MPKRGKKGAVVEDAEEPKTEPEAKKSKAGAKKNEKEAVGEGAVLYEDPPDQKTSPSGKS. The necessary for interaction with YBX1, binding to RNA, association together with NPM1 to rRNA, endoribonuclease activity on abasic RNA and localization in the nucleoli stretch occupies residues 2–33; the sequence is PKRGKKGAVVEDAEEPKTEPEAKKSKAGAKKN. N6-acetyllysine; by EP300 occurs at positions 6 and 7. A Nuclear localization signal (NLS) motif is present at residues 8-13; it reads GAVVED. Over residues 16 to 38 the composition is skewed to basic and acidic residues; that stretch reads EPKTEPEAKKSKAGAKKNEKEAV. The interval 23-33 is necessary for interaction with NPM1 and for efficient rRNA binding; the sequence is AKKSKAGAKKN. 4 positions are modified to N6-acetyllysine: Lys-27, Lys-31, Lys-32, and Lys-35. A Phosphoserine modification is found at Ser-54. Residues 64–80 carry the Nuclear export signal (NES) motif; the sequence is ICSWNVDGLRAWIKKKG. Cys-65 carries the S-nitrosocysteine; alternate modification. Cys-65 and Cys-93 are disulfide-bonded. Residue Asp-70 coordinates Mg(2+). An S-nitrosocysteine; alternate modification is found at Cys-93. Glu-96 lines the Mg(2+) pocket. Tyr-171 is an active-site residue. An N6-acetyllysine modification is found at Lys-197. Asp-210 and Asn-212 together coordinate Mg(2+). The active-site Proton donor/acceptor is the Asp-210. Thr-233 is modified (phosphothreonine; by CDK5). The mitochondrial targeting sequence (MTS) stretch occupies residues 289-318; it reads QSVLPALCDSKIRSKALGSDHCPITLYLAL. Asp-308 provides a ligand contact to Mg(2+). Cys-310 carries the S-nitrosocysteine modification.

The protein belongs to the DNA repair enzymes AP/ExoA family. As to quaternary structure, monomer. Homodimer; disulfide-linked. Component of the SET complex, composed of at least APEX1, SET, ANP32A, HMGB2, NME1 and TREX1. Associates with the dimer XRCC5/XRCC6 in a DNA-dependent manner. Interacts with SIRT1; the interaction is increased in the context of genotoxic stress. Interacts with HDAC1, HDAC2 and HDAC3; the interactions are not dependent on the APEX1 acetylation status. Interacts with XRCC1; the interaction is induced by SIRT1 and increased with the APEX1 acetylated form. Interacts with NPM1 (via N-terminal domain); the interaction is RNA-dependent and decreases in hydrogen peroxide-damaged cells. Interacts (via N-terminus) with YBX1 (via C-terminus); the interaction is increased in presence of APEX1 acetylated at Lys-6 and Lys-7. Interacts with HNRNPL; the interaction is DNA-dependent. Interacts (via N-terminus) with KPNA1 and KPNA2. Interacts with TXN; the interaction stimulates the FOS/JUN AP-1 complex DNA-binding activity in a redox-dependent manner. Interacts with GZMA, KRT8, MDM2, POLB, PRDX6, PRPF19, RPLP0, TOMM20 and WDR77. Binds to CDK5. Mg(2+) is required as a cofactor. Requires Mn(2+) as cofactor. In terms of processing, phosphorylated. Phosphorylation by kinase PKC or casein kinase CK2 results in enhanced redox activity that stimulates binding of the FOS/JUN AP-1 complex to its cognate binding site. AP-endodeoxyribonuclease activity is not affected by CK2-mediated phosphorylation. Phosphorylation of Thr-233 by CDK5 in response to MPP(+)/MPTP (1-methyl-4-phenylpyridinium) reduces AP-endodeoxyribonuclease activity resulting in accumulation of DNA damage and contributing to neuronal death. Post-translationally, acetylated on Lys-6 and Lys-7. Acetylation is increased by the transcriptional coactivator EP300 acetyltransferase, genotoxic agents like H(2)O(2) and methyl methanesulfonate (MMS). Acetylation increases its binding affinity to the negative calcium response element (nCaRE) DNA promoter. The acetylated form induces a stronger binding of YBX1 to the Y-box sequence in the MDR1 promoter than the unacetylated form. Deacetylated on lysines. Lys-6 and Lys-7 are deacetylated by SIRT1. Cleaved at Lys-31 by granzyme A to create the mitochondrial form; leading in reduction of binding to DNA, AP endodeoxyribonuclease activity, redox activation of transcription factors and to enhanced cell death. Cleaved by granzyme K; leading to intracellular ROS accumulation and enhanced cell death after oxidative stress. In terms of processing, cys-69 and Cys-93 are nitrosylated in response to nitric oxide (NO) and lead to the exposure of the nuclear export signal (NES). Post-translationally, ubiquitinated by MDM2; leading to translocation to the cytoplasm and proteasomal degradation. The mitochondrial form is expressed in liver (at protein level). Thymus.

The protein resides in the nucleus. The protein localises to the nucleolus. It is found in the nucleus speckle. It localises to the endoplasmic reticulum. Its subcellular location is the cytoplasm. The protein resides in the mitochondrion. It catalyses the reaction Exonucleolytic cleavage in the 3'- to 5'-direction to yield nucleoside 5'-phosphates.. Its activity is regulated as follows. NPM1 stimulates endodeoxyribonuclease activity on double-stranded DNA with AP sites, but inhibits endoribonuclease activity on single-stranded RNA containing AP sites. Its function is as follows. Multifunctional protein that plays a central role in the cellular response to oxidative stress. The two major activities of APEX1 are DNA repair and redox regulation of transcriptional factors. Functions as an apurinic/apyrimidinic (AP) endodeoxyribonuclease in the DNA base excision repair (BER) pathway of DNA lesions induced by oxidative and alkylating agents. Initiates repair of AP sites in DNA by catalyzing hydrolytic incision of the phosphodiester backbone immediately adjacent to the damage, generating a single-strand break with 5'-deoxyribose phosphate and 3'-hydroxyl ends. Also incises at AP sites in the DNA strand of DNA/RNA hybrids, single-stranded DNA regions of R-loop structures, and single-stranded RNA molecules. Has 3'-5' exoribonuclease activity on mismatched deoxyribonucleotides at the 3' termini of nicked or gapped DNA molecules during short-patch BER. Possesses DNA 3' phosphodiesterase activity capable of removing lesions (such as phosphoglycolate) blocking the 3' side of DNA strand breaks. May also play a role in the epigenetic regulation of gene expression by participating in DNA demethylation. Acts as a loading factor for POLB onto non-incised AP sites in DNA and stimulates the 5'-terminal deoxyribose 5'-phosphate (dRp) excision activity of POLB. Plays a role in the protection from granzyme-mediated cellular repair leading to cell death. Also involved in the DNA cleavage step of class switch recombination (CSR). On the other hand, APEX1 also exerts reversible nuclear redox activity to regulate DNA binding affinity and transcriptional activity of transcriptional factors by controlling the redox status of their DNA-binding domain, such as the FOS/JUN AP-1 complex after exposure to IR. Involved in calcium-dependent down-regulation of parathyroid hormone (PTH) expression by binding to negative calcium response elements (nCaREs). Together with HNRNPL or the dimer XRCC5/XRCC6, associates with nCaRE, acting as an activator of transcriptional repression. Stimulates the YBX1-mediated MDR1 promoter activity, when acetylated at Lys-6 and Lys-7, leading to drug resistance. Also acts as an endoribonuclease involved in the control of single-stranded RNA metabolism. Plays a role in regulating MYC mRNA turnover by preferentially cleaving in between UA and CA dinucleotides of the MYC coding region determinant (CRD). In association with NMD1, plays a role in the rRNA quality control process during cell cycle progression. Associates, together with YBX1, on the MDR1 promoter. Together with NPM1, associates with rRNA. Binds DNA and RNA. The sequence is that of DNA repair nuclease/redox regulator APEX1 (APEX1) from Bos taurus (Bovine).